A 128-amino-acid polypeptide reads, in one-letter code: uncharacterized protein (128 aa).

This is an uncharacterized protein from Archaeoglobus fulgidus (strain ATCC 49558 / DSM 4304 / JCM 9628 / NBRC 100126 / VC-16).